We begin with the raw amino-acid sequence, 199 residues long: Transgelin-3 (199 aa).

Residues 24 to 136 (ADLENKLVDW…RTLMALGSVA (113 aa)) enclose the Calponin-homology (CH) domain. Ser163 is subject to Phosphoserine. The stretch at 174–199 (IGLQMGSNKGASQAGMTGYGMPRQIM) is one Calponin-like repeat. A compositionally biased stretch (polar residues) spans 178–188 (MGSNKGASQAG). The disordered stretch occupies residues 178–199 (MGSNKGASQAGMTGYGMPRQIM).

It belongs to the calponin family.

The chain is Transgelin-3 (TAGLN3) from Bos taurus (Bovine).